The primary structure comprises 296 residues: MCELKELERELQPRQHLWYFEYYTGNNVGLFMKMNRVIYSGQSDIQRIDIFENPDLGVVFALDGITMTTEKDEFMYHEMLAHVPMFLHPNPKKVLIIGGGDGGTLREVLKHDSVEKAILCEVDGLVIEAARKYLKQTSCGFDDPRAEIVIANGAEYVRKFKNEFDVIIIDSTDPTAGQGGHLFTEEFYQACYDALKEDGVFSAETEDPFYDIGWFKLAYKRISKVFPITKVYLGFMTTYPSGMWSYTFASKGIDPIKDFDPEKVRKFNKELKYYNEEVHVASFALPNFVKKELGLM.

Positions 16-251 constitute a PABS domain; sequence HLWYFEYYTG…GMWSYTFASK (236 aa). Residue Gln-46 participates in S-methyl-5'-thioadenosine binding. Positions 77 and 101 each coordinate spermidine. S-methyl-5'-thioadenosine-binding positions include Glu-121 and 152–153; that span reads NG. Residue Asp-170 is the Proton acceptor of the active site. 170-173 is a binding site for spermidine; sequence DSTD.

Belongs to the spermidine/spermine synthase family. Homodimer or homotetramer.

It localises to the cytoplasm. It carries out the reaction S-adenosyl 3-(methylsulfanyl)propylamine + putrescine = S-methyl-5'-thioadenosine + spermidine + H(+). It functions in the pathway amine and polyamine biosynthesis; spermidine biosynthesis; spermidine from putrescine: step 1/1. Catalyzes the irreversible transfer of a propylamine group from the amino donor S-adenosylmethioninamine (decarboxy-AdoMet) to putrescine (1,4-diaminobutane) to yield spermidine. This chain is Polyamine aminopropyltransferase, found in Thermotoga neapolitana (strain ATCC 49049 / DSM 4359 / NBRC 107923 / NS-E).